Consider the following 144-residue polypeptide: Transmembrane protein 170A (144 aa).

The Extracellular segment spans residues 1 to 50 (MEREGSGGGGGSAGLLQQILSLKLVPRVGNGTLCPNSTSLCSFPEMWYGV). Asparagine 30 and asparagine 36 each carry an N-linked (GlcNAc...) asparagine glycan. The chain crosses the membrane as a helical span at residues 51 to 71 (FLWALMSSVFFHVPAGLLALF). Topologically, residues 72–85 (TLRHHKYGRFMSVS) are cytoplasmic. Residues 86 to 106 (ILLMGIVGPITAGILTSAAIA) form a helical membrane-spanning segment. Over 107–116 (GVYRAAGKEM) the chain is Extracellular. A helical transmembrane segment spans residues 117–137 (IPFEALTLGTGQTFCVVVVSF). Residues 138–144 (LRVLATL) are Cytoplasmic-facing.

Belongs to the TMEM170 family. As to quaternary structure, interacts with RTN4.

It is found in the endoplasmic reticulum membrane. It localises to the nucleus envelope. In terms of biological role, acts as a regulator of endoplasmic reticulum (ER) and nuclear envelope (NE) morphogenesis. Affects the ratio between tubular ER and ER sheets by promoting sheet formation at the expense of tubules. Influences NE expansion, nuclear pore complex formation and proper localization of inner nuclear membrane proteins. The polypeptide is Transmembrane protein 170A (Tmem170a) (Mus musculus (Mouse)).